We begin with the raw amino-acid sequence, 310 residues long: Glutaminase (310 aa).

Ser66, Asn117, Glu161, Asn168, Tyr192, Tyr244, and Val262 together coordinate substrate.

Belongs to the glutaminase family. Homotetramer.

The catalysed reaction is L-glutamine + H2O = L-glutamate + NH4(+). The chain is Glutaminase from Shigella boydii serotype 4 (strain Sb227).